A 442-amino-acid polypeptide reads, in one-letter code: UDP-N-acetylmuramate--L-alanine ligase (442 aa).

ATP is bound at residue 109-115; that stretch reads GAHGKTS.

The protein belongs to the MurCDEF family.

The protein resides in the cytoplasm. The enzyme catalyses UDP-N-acetyl-alpha-D-muramate + L-alanine + ATP = UDP-N-acetyl-alpha-D-muramoyl-L-alanine + ADP + phosphate + H(+). Its pathway is cell wall biogenesis; peptidoglycan biosynthesis. Cell wall formation. This is UDP-N-acetylmuramate--L-alanine ligase from Streptococcus pyogenes serotype M2 (strain MGAS10270).